We begin with the raw amino-acid sequence, 201 residues long: Alpha-1-acid glycoprotein 2 (201 aa).

The signal sequence occupies residues 1–18 (MALSWVLTVLSLLPLLEA). Gln19 carries the post-translational modification Pyrrolidone carboxylic acid. Disulfide bonds link Cys23–Cys165 and Cys90–Cys183. Residue Asn33 is glycosylated (N-linked (GlcNAc...) (complex) asparagine). Asn56, Asn72, Asn93, and Asn103 each carry an N-linked (GlcNAc...) asparagine glycan.

Belongs to the calycin superfamily. Lipocalin family. In terms of processing, N-glycosylated. N-glycan heterogeneity at Asn-33: Hex5HexNAc4 (minor), Hex6HexNAc5 (major) and dHex1Hex6HexNAc5 (minor). As to expression, expressed by the liver and secreted in plasma.

It localises to the secreted. Functions as a transport protein in the blood stream. Binds various hydrophobic ligands in the interior of its beta-barrel domain. Also binds synthetic drugs and influences their distribution and availability. Appears to function in modulating the activity of the immune system during the acute-phase reaction. This is Alpha-1-acid glycoprotein 2 (ORM2) from Homo sapiens (Human).